Here is a 460-residue protein sequence, read N- to C-terminus: NADH-ubiquinone oxidoreductase chain 4 (460 aa).

13 helical membrane passes run 22–42 (WLWP…ITWL), 61–81 (PLST…LLAS), 94–113 (RMYI…AFGA), 117–139 (IMFY…RWGN), 148–168 (TYFL…LLML), 195–217 (IWWA…HLWL), 225–245 (PVAG…YGMM), 258–278 (MVYP…SICL), 285–304 (SLIA…GILI), 308–330 (WGFT…LFCL), 351–371 (IALP…LALP), 394–414 (LILT…MFLM), and 436–456 (LLMA…ALLW).

The protein belongs to the complex I subunit 4 family.

It localises to the mitochondrion membrane. It carries out the reaction a ubiquinone + NADH + 5 H(+)(in) = a ubiquinol + NAD(+) + 4 H(+)(out). Its function is as follows. Core subunit of the mitochondrial membrane respiratory chain NADH dehydrogenase (Complex I) that is believed to belong to the minimal assembly required for catalysis. Complex I functions in the transfer of electrons from NADH to the respiratory chain. The immediate electron acceptor for the enzyme is believed to be ubiquinone. The sequence is that of NADH-ubiquinone oxidoreductase chain 4 (MT-ND4) from Gadus morhua (Atlantic cod).